A 274-amino-acid chain; its full sequence is Diaminopimelate epimerase (274 aa).

Asn11, Gln44, and Asn64 together coordinate substrate. The Proton donor role is filled by Cys73. Substrate contacts are provided by residues Gly74–Asn75, Asn157, Asn190, and Glu208–Arg209. The active-site Proton acceptor is the Cys217. Substrate is bound at residue Gly218–Ser219.

This sequence belongs to the diaminopimelate epimerase family. In terms of assembly, homodimer.

It localises to the cytoplasm. The catalysed reaction is (2S,6S)-2,6-diaminopimelate = meso-2,6-diaminopimelate. It functions in the pathway amino-acid biosynthesis; L-lysine biosynthesis via DAP pathway; DL-2,6-diaminopimelate from LL-2,6-diaminopimelate: step 1/1. In terms of biological role, catalyzes the stereoinversion of LL-2,6-diaminopimelate (L,L-DAP) to meso-diaminopimelate (meso-DAP), a precursor of L-lysine and an essential component of the bacterial peptidoglycan. This is Diaminopimelate epimerase from Yersinia enterocolitica serotype O:8 / biotype 1B (strain NCTC 13174 / 8081).